Reading from the N-terminus, the 1088-residue chain is RNA-directed RNA polymerase (1088 aa).

The RdRp catalytic domain maps to 501 to 687; it reads LSYGDVTRFL…AKRYIAGGKI (187 aa).

This sequence belongs to the reoviridae RNA-directed RNA polymerase family. In terms of assembly, interacts with VP3 (Potential). Interacts with VP2; this interaction activates VP1. Interacts with NSP5; this interaction is probably necessary for the formation of functional virus factories. Interacts with NSP2; this interaction is weak. Requires Mg(2+) as cofactor.

It is found in the virion. The catalysed reaction is RNA(n) + a ribonucleoside 5'-triphosphate = RNA(n+1) + diphosphate. In terms of biological role, RNA-directed RNA polymerase that is involved in both transcription and genome replication. Together with VP3 capping enzyme, forms an enzyme complex positioned near the channels situated at each of the five-fold vertices of the core. Following infection, the outermost layer of the virus is lost, leaving a double-layered particle (DLP) made up of the core and VP6 shell. VP1 then catalyzes the transcription of fully conservative plus-strand genomic RNAs that are extruded through the DLP's channels into the cytoplasm where they function as mRNAs for translation of viral proteins. One copy of each of the viral (+)RNAs is also recruited during core assembly, together with newly synthesized polymerase complexes and VP2. The polymerase of these novo-formed particles catalyzes the synthesis of complementary minus-strands leading to dsRNA formation. To do so, the polymerase specifically recognizes and binds 4 bases 5'-UGUG-3' in the conserved 3'-sequence of plus-strand RNA templates. VP2 presumably activates the autoinhibited VP1-RNA complex to coordinate packaging and genome replication. Once dsRNA synthesis is complete, the polymerase switches to the transcriptional mode, thus providing secondary transcription. The polypeptide is RNA-directed RNA polymerase (Homo sapiens (Human)).